The following is a 136-amino-acid chain: Putative pre-16S rRNA nuclease (136 aa).

Belongs to the YqgF nuclease family.

It is found in the cytoplasm. Functionally, could be a nuclease involved in processing of the 5'-end of pre-16S rRNA. The polypeptide is Putative pre-16S rRNA nuclease (Francisella tularensis subsp. tularensis (strain FSC 198)).